Consider the following 227-residue polypeptide: MTADGGARPRIRSYVLRAGRVGSGQARALVELGPRFVLPYQPELLDLDAVFARVAPRVLEIGFGMGEGLAETAASHPEIDYIGVEVHTPGVGALLKQLGERELGNVRVIQHDAVEVLTAMLAPATLAGIHIFFPDPWHKKRHHKRRLIQAPLVELLASRLAPGGYIHLATDWQDYAEQMLVVLEAEAQLENTAAAYVPRPDTRPLTKFEQRGIRLGHGVWDLVFRRR.

4 residues coordinate S-adenosyl-L-methionine: E60, E85, D112, and D135. D135 is a catalytic residue. Residues K139, D171, and 206 to 209 (TKFE) contribute to the substrate site.

This sequence belongs to the class I-like SAM-binding methyltransferase superfamily. TrmB family.

The enzyme catalyses guanosine(46) in tRNA + S-adenosyl-L-methionine = N(7)-methylguanosine(46) in tRNA + S-adenosyl-L-homocysteine. It functions in the pathway tRNA modification; N(7)-methylguanine-tRNA biosynthesis. Its function is as follows. Catalyzes the formation of N(7)-methylguanine at position 46 (m7G46) in tRNA. The protein is tRNA (guanine-N(7)-)-methyltransferase of Thiobacillus denitrificans (strain ATCC 25259 / T1).